Consider the following 226-residue polypeptide: Probable N-acetyl-alpha-D-glucosaminyl L-malate deacetylase 2 (226 aa).

The Zn(2+) site is built by H13, D16, and H127.

It belongs to the PIGL family. Zn(2+) serves as cofactor.

The catalysed reaction is (S)-malyl N-acetyl-alpha-D-glucosaminide + H2O = (S)-malyl alpha-D-glucosaminide + acetate. Functionally, involved in bacillithiol (BSH) biosynthesis. Catalyzes the second step of the pathway, the deacetylation of N-acetylglucosaminylmalate (GlcNAc-Mal) to glucosamine malate (GlcN-Mal). Could also be involved in bacillithiol-detoxifying pathways through formation of S-mercapturic adducts. The sequence is that of Probable N-acetyl-alpha-D-glucosaminyl L-malate deacetylase 2 from Bacillus anthracis.